Consider the following 615-residue polypeptide: uncharacterized protein (615 aa).

It belongs to the NodU/CmcH family.

This is an uncharacterized protein from Synechocystis sp. (strain ATCC 27184 / PCC 6803 / Kazusa).